The following is a 473-amino-acid chain: Knob-associated histidine-rich protein (473 aa).

The signal sequence occupies residues 1 to 34 (MKSFKNKNTLRRKKAFPVFTKILLVSFLVWVLKC). Residue Asn-42 is glycosylated (N-linked (GlcNAc...) asparagine). Positions 57-87 (AQKQHEHHHHHHHQHQHQHQAPHQAHHHHHH) are enriched in basic residues. 2 disordered regions span residues 57-143 (AQKQ…QVFR) and 347-473 (SSVN…DGSK). A compositionally biased stretch (low complexity) spans 95–104 (PQVHQQVHGQ). Residues 108–117 (HHHHHHHHHQ) are compositionally biased toward basic residues. Composition is skewed to basic and acidic residues over residues 354–375 (KHGD…EGEK) and 396–405 (KDNEDAESVK). Positions 406 to 422 (SKKHKSHDCEKKKSKKH) are enriched in basic residues. Basic and acidic residues-rich tracts occupy residues 423 to 444 (KDNE…GEKH) and 453 to 473 (KTNE…DGSK).

The protein localises to the secreted. KAHRP might mimick human histidine-rich glycoproteins to anchor host thrombospondin or a parasite analog in a binding complex with the endothelial cell receptor. This is Knob-associated histidine-rich protein from Plasmodium falciparum.